The following is a 671-amino-acid chain: cGMP-dependent protein kinase 1 (671 aa).

Serine 2 carries the post-translational modification N-acetylserine. Positions 2-59 (SELEEDFAKILMLKEERIKELEKRLSEKEEEIQELKRKLHKCQSVLPVPSTHIGPRTT) form a coiled coil. A required for dimerization region spans residues 2–102 (SELEEDFAKI…LIKEAILDND (101 aa)). The interval 9–44 (AKILMLKEERIKELEKRLSEKEEEIQELKRKLHKCQ) is leucine-zipper. The interval 50–75 (PSTHIGPRTTRAQGISAEPQTYRSFH) is autoinhibitory domain. Threonine 59 carries the phosphothreonine; by autocatalysis modification. Residues 103 to 220 (FMKNLELSQI…EYMEFLKSVP (118 aa)) form a cGMP-binding, high affinity region. Residues 167-170 (GELA), 177-178 (RT), arginine 282, 291-294 (GEKA), 301-302 (RT), and tyrosine 336 each bind 3',5'-cyclic GMP. Positions 221–341 (TFQSLPEEIL…SNKAYEDAEA (121 aa)) are cGMP-binding, low affinity. Residues 360–619 (FNIIDTLGVG…VKDIQKHKWF (260 aa)) form the Protein kinase domain. ATP contacts are provided by residues 366 to 374 (LGVGGFGRV) and lysine 390. Aspartate 484 acts as the Proton acceptor in catalysis. Threonine 515 bears the Phosphothreonine mark. Positions 620-671 (EGFNWEGLRKGTLTPPIIPSVASPTDTSNFDGFPEDNDEPPPDDNSGWDIDF) constitute an AGC-kinase C-terminal domain. The interval 635–671 (PIIPSVASPTDTSNFDGFPEDNDEPPPDDNSGWDIDF) is disordered. Acidic residues predominate over residues 652 to 661 (FPEDNDEPPP).

It belongs to the protein kinase superfamily. AGC Ser/Thr protein kinase family. cGMP subfamily. As to quaternary structure, isoform alpha: parallel homodimer or heterodimer and also heterotetramer. Interacts directly with PPP1R12A. Non-covalent dimer of dimer of PRKG1-PRKG1 and PPP1R12A-PPP1R12A. This interaction targets PRKG1 to stress fibers to mediate smooth muscle cell relaxation and vasodilation in responses to rises in cGMP. Isoform beta: antiparallel homodimer. Part of cGMP kinase signaling complex at least composed of ACTA2/alpha-actin, CNN1/calponin H1, PLN/phospholamban, PRKG1 and ITPR1. Interacts with IRAG1. Forms a stable complex with ITPR1, IRAG1, and isoform beta of PRKG1. Interacts with TRPC7 (via ankyrin repeat domain). Isoform alpha interacts with RGS2. Interacts with GTF2I. In terms of processing, autophosphorylation increases kinase activity. Post-translationally, 65 kDa monomer is produced by proteolytic cleavage.

The protein resides in the cytoplasm. The enzyme catalyses L-seryl-[protein] + ATP = O-phospho-L-seryl-[protein] + ADP + H(+). It catalyses the reaction L-threonyl-[protein] + ATP = O-phospho-L-threonyl-[protein] + ADP + H(+). Its activity is regulated as follows. In the absence of cGMP, PRKG1 activity is suppressed by autoinhibitory contacts. In terms of biological role, serine/threonine protein kinase that acts as a key mediator of the nitric oxide (NO)/cGMP signaling pathway. GMP binding activates PRKG1, which phosphorylates serines and threonines on many cellular proteins. Numerous protein targets for PRKG1 phosphorylation are implicated in modulating cellular calcium, but the contribution of each of these targets may vary substantially among cell types. Proteins that are phosphorylated by PRKG1 regulate platelet activation and adhesion, smooth muscle contraction, cardiac function, gene expression, feedback of the NO-signaling pathway, and other processes involved in several aspects of the CNS like axon guidance, hippocampal and cerebellar learning, circadian rhythm and nociception. Smooth muscle relaxation is mediated through lowering of intracellular free calcium, by desensitization of contractile proteins to calcium, and by decrease in the contractile state of smooth muscle or in platelet activation. Regulates intracellular calcium levels via several pathways: phosphorylates IRAG1 and inhibits IP3-induced Ca(2+) release from intracellular stores, phosphorylation of KCNMA1 (BKCa) channels decreases intracellular Ca(2+) levels, which leads to increased opening of this channel. PRKG1 phosphorylates the canonical transient receptor potential channel (TRPC) family which inactivates the associated inward calcium current. Another mode of action of NO/cGMP/PKGI signaling involves PKGI-mediated inactivation of the Ras homolog gene family member A (RhoA). Phosphorylation of RHOA by PRKG1 blocks the action of this protein in myriad processes: regulation of RHOA translocation; decreasing contraction; controlling vesicle trafficking, reduction of myosin light chain phosphorylation resulting in vasorelaxation. Activation of PRKG1 by NO signaling also alters gene expression in a number of tissues. In smooth muscle cells, increased cGMP and PRKG1 activity influence expression of smooth muscle-specific contractile proteins, levels of proteins in the NO/cGMP signaling pathway, down-regulation of the matrix proteins osteopontin and thrombospondin-1 to limit smooth muscle cell migration and phenotype. Regulates vasodilator-stimulated phosphoprotein (VASP) functions in platelets and smooth muscle. The polypeptide is cGMP-dependent protein kinase 1 (PRKG1) (Oryctolagus cuniculus (Rabbit)).